Here is a 417-residue protein sequence, read N- to C-terminus: Gamma-glutamyl phosphate reductase (417 aa).

Belongs to the gamma-glutamyl phosphate reductase family.

The protein resides in the cytoplasm. It carries out the reaction L-glutamate 5-semialdehyde + phosphate + NADP(+) = L-glutamyl 5-phosphate + NADPH + H(+). It participates in amino-acid biosynthesis; L-proline biosynthesis; L-glutamate 5-semialdehyde from L-glutamate: step 2/2. Functionally, catalyzes the NADPH-dependent reduction of L-glutamate 5-phosphate into L-glutamate 5-semialdehyde and phosphate. The product spontaneously undergoes cyclization to form 1-pyrroline-5-carboxylate. The chain is Gamma-glutamyl phosphate reductase from Haemophilus influenzae (strain ATCC 51907 / DSM 11121 / KW20 / Rd).